The following is a 429-amino-acid chain: Adenylosuccinate synthetase (429 aa).

Residues 13–19 (GDEGKGK) and 41–43 (GHT) each bind GTP. Catalysis depends on Asp-14, which acts as the Proton acceptor. The Mg(2+) site is built by Asp-14 and Gly-41. Residues 14 to 17 (DEGK), 39 to 42 (NAGH), Thr-130, Arg-144, Gln-225, Thr-240, and Arg-304 each bind IMP. Catalysis depends on His-42, which acts as the Proton donor. 300 to 306 (ATTGRAR) serves as a coordination point for substrate. GTP contacts are provided by residues Arg-306, 332–334 (KLD), and 414–416 (STG).

This sequence belongs to the adenylosuccinate synthetase family. As to quaternary structure, homodimer. It depends on Mg(2+) as a cofactor.

Its subcellular location is the cytoplasm. The enzyme catalyses IMP + L-aspartate + GTP = N(6)-(1,2-dicarboxyethyl)-AMP + GDP + phosphate + 2 H(+). It functions in the pathway purine metabolism; AMP biosynthesis via de novo pathway; AMP from IMP: step 1/2. In terms of biological role, plays an important role in the de novo pathway of purine nucleotide biosynthesis. Catalyzes the first committed step in the biosynthesis of AMP from IMP. In Acidithiobacillus ferrooxidans (Thiobacillus ferrooxidans), this protein is Adenylosuccinate synthetase.